We begin with the raw amino-acid sequence, 279 residues long: 2-dehydro-3-deoxyphosphooctonate aldolase (279 aa).

This sequence belongs to the KdsA family.

It is found in the cytoplasm. It carries out the reaction D-arabinose 5-phosphate + phosphoenolpyruvate + H2O = 3-deoxy-alpha-D-manno-2-octulosonate-8-phosphate + phosphate. It functions in the pathway carbohydrate biosynthesis; 3-deoxy-D-manno-octulosonate biosynthesis; 3-deoxy-D-manno-octulosonate from D-ribulose 5-phosphate: step 2/3. It participates in bacterial outer membrane biogenesis; lipopolysaccharide biosynthesis. This Desulfosudis oleivorans (strain DSM 6200 / JCM 39069 / Hxd3) (Desulfococcus oleovorans) protein is 2-dehydro-3-deoxyphosphooctonate aldolase.